Reading from the N-terminus, the 479-residue chain is Cruciferin PGCRURSE5 (479 aa).

Positions 1-23 (MVKLAHLLVATFGVLLVLNGCLA) are cleaved as a signal peptide. Cystine bridges form between cysteine 37–cysteine 70 and cysteine 113–cysteine 296. Residues 42–241 (LDVLQPTETI…ALKMQLRLAQ (200 aa)) enclose the Cupin type-1 1 domain. Threonine 116 is modified (phosphothreonine). 3 disordered regions span residues 117–144 (FMDS…GFRD), 196–219 (RTFR…QQQN), and 271–291 (YESE…DNGL). The span at 124 to 141 (QGQGQQGQQGQQGQQQQG) shows a compositional bias: low complexity. The 150-residue stretch at 302–451 (ENIDDPARAD…AFQISLEEAR (150 aa)) folds into the Cupin type-1 2 domain. Threonine 415 and threonine 440 each carry phosphothreonine.

Belongs to the 11S seed storage protein (globulins) family. In terms of assembly, hexamer; each subunit is composed of an acidic and a basic chain derived from a single precursor and linked by a disulfide bond.

This is a seed storage protein. The chain is Cruciferin PGCRURSE5 (CRURS) from Raphanus sativus (Radish).